A 630-amino-acid polypeptide reads, in one-letter code: Biosynthetic arginine decarboxylase (630 aa).

K99 carries the post-translational modification N6-(pyridoxal phosphate)lysine. Residue 279–289 coordinates substrate; it reads FDVGGGLGVDY.

The protein belongs to the Orn/Lys/Arg decarboxylase class-II family. SpeA subfamily. It depends on Mg(2+) as a cofactor. Pyridoxal 5'-phosphate serves as cofactor.

It catalyses the reaction L-arginine + H(+) = agmatine + CO2. Its pathway is amine and polyamine biosynthesis; agmatine biosynthesis; agmatine from L-arginine: step 1/1. Its function is as follows. Catalyzes the biosynthesis of agmatine from arginine. This chain is Biosynthetic arginine decarboxylase, found in Neisseria meningitidis serogroup B (strain ATCC BAA-335 / MC58).